A 306-amino-acid polypeptide reads, in one-letter code: Abnormal cell migration protein 21 (306 aa).

TSP type-1 domains follow at residues 55–102 (PGGW…AISS) and 109–155 (FGSW…DECP). C-linked (Man) tryptophan glycosylation is found at tryptophan 58 and tryptophan 61. 3 disulfide bridges follow: cysteine 121–cysteine 149, cysteine 123–cysteine 154, and cysteine 134–cysteine 139. A helical transmembrane segment spans residues 240-260 (CLPLHFAIPIFCFCILTGFLL).

Post-translationally, glycosylated via C-mannosylation by dpy-19 at Trp-58 and Trp-61.

The protein localises to the membrane. Required for determination of left/right asymmetry in nervous system. Acts together with unc-40 to control an initial left-right asymmetric polarization of the Q neuroblasts. Mig-21 and unc-40 may control the asymmetry in Wnt signaling response by restricting posterior polarization to one of the 2 Q neuroblasts. Involved in left-side QL posterior migration. In right-side QR, unc-40 and mig-21 pathways mutually inhibit each other in posterior migration, allowing anterior QR migration. The chain is Abnormal cell migration protein 21 (mig-21) from Caenorhabditis elegans.